A 23-amino-acid chain; its full sequence is Basic phospholipase A2 mangshantoxin (23 aa).

The protein belongs to the phospholipase A2 family. Group II subfamily. Ca(2+) serves as cofactor. In terms of processing, contains 7 disulfide bonds. In terms of tissue distribution, expressed by the venom gland.

It localises to the secreted. It catalyses the reaction a 1,2-diacyl-sn-glycero-3-phosphocholine + H2O = a 1-acyl-sn-glycero-3-phosphocholine + a fatty acid + H(+). Snake venom phospholipase A2 (PLA2) that displays presynaptic neurotoxicity. PLA2 catalyzes the calcium-dependent hydrolysis of the 2-acyl groups in 3-sn-phosphoglycerides. The protein is Basic phospholipase A2 mangshantoxin of Protobothrops mangshanensis (Mangshan pitviper).